Here is a 106-residue protein sequence, read N- to C-terminus: ATP-dependent Clp protease adapter protein ClpS (106 aa).

Residues 1–22 are disordered; the sequence is MNEYHNSLKSKESVKDERQQKL. Positions 9–20 are enriched in basic and acidic residues; that stretch reads KSKESVKDERQQ.

The protein belongs to the ClpS family. As to quaternary structure, binds to the N-terminal domain of the chaperone ClpA.

Its function is as follows. Involved in the modulation of the specificity of the ClpAP-mediated ATP-dependent protein degradation. In Photorhabdus laumondii subsp. laumondii (strain DSM 15139 / CIP 105565 / TT01) (Photorhabdus luminescens subsp. laumondii), this protein is ATP-dependent Clp protease adapter protein ClpS.